Reading from the N-terminus, the 459-residue chain is ATP synthase subunit beta (459 aa).

147–154 (GGAGVGKT) serves as a coordination point for ATP.

It belongs to the ATPase alpha/beta chains family. As to quaternary structure, F-type ATPases have 2 components, CF(1) - the catalytic core - and CF(0) - the membrane proton channel. CF(1) has five subunits: alpha(3), beta(3), gamma(1), delta(1), epsilon(1). CF(0) has three main subunits: a(1), b(2) and c(9-12). The alpha and beta chains form an alternating ring which encloses part of the gamma chain. CF(1) is attached to CF(0) by a central stalk formed by the gamma and epsilon chains, while a peripheral stalk is formed by the delta and b chains.

It localises to the cell inner membrane. The catalysed reaction is ATP + H2O + 4 H(+)(in) = ADP + phosphate + 5 H(+)(out). Functionally, produces ATP from ADP in the presence of a proton gradient across the membrane. The catalytic sites are hosted primarily by the beta subunits. The protein is ATP synthase subunit beta of Hydrogenovibrio crunogenus (strain DSM 25203 / XCL-2) (Thiomicrospira crunogena).